Reading from the N-terminus, the 26-residue chain is M-poneritoxin-Ng1c (26 aa).

Expressed by the venom gland.

The protein localises to the secreted. Its subcellular location is the target cell membrane. Has a broad spectrum of activity against both Gram-positive and Gram-negative bacteria and S.cerevisiae. Has insecticidal and hemolytic activities. May act by disrupting the integrity of the bacterial cell membrane. This is M-poneritoxin-Ng1c from Neoponera goeldii (Ponerine ant).